Consider the following 140-residue polypeptide: Large ribosomal subunit protein uL11 (140 aa).

It belongs to the universal ribosomal protein uL11 family. Part of the ribosomal stalk of the 50S ribosomal subunit. Interacts with L10 and the large rRNA to form the base of the stalk. L10 forms an elongated spine to which L12 dimers bind in a sequential fashion forming a multimeric L10(L12)X complex. Post-translationally, one or more lysine residues are methylated.

In terms of biological role, forms part of the ribosomal stalk which helps the ribosome interact with GTP-bound translation factors. This is Large ribosomal subunit protein uL11 from Halothermothrix orenii (strain H 168 / OCM 544 / DSM 9562).